The sequence spans 964 residues: MNSTLQNQTKTNLEKVGTDPLDTFPRRHIGPNLQQTAEMLKELGLSSVEELIDKAVPVGIRLKKSLDLPKASTEHKILQNLKGIASQNQVFRSYIGAGYHSCIIPGVIQRNILENPGWYTAYTPYQAEISQGRLEALLNFQTMIIDLTGLEISNASLLDEGTAAAEAMFLAYSVRKNETAKKFFVSELCHPQTIDVVVTRANPLGIEVQIGNHESIELNEDFFGVLLQYPATDGKIIDYTSFIQRSHNVGAISTVAADLLALTLLKSPGEMGADIAVGSSQRFGLPLGFGGPHAGYFATKDEFKRSMPGRLIGVSKDSQGNSGLRLSLQTREQHIRRDKATSNICTAQVLLAVISSMYAVYHGPEGLKNIATRIYKFTSIFANVLKNAGFSITNEFFFDTITIQAGTKVQEILNRAYSKKINFREYKDGKIGITLDETVNLEDLKDLLEIFEIKNTDIEKLFVDVSNVPDSFKRKTSYLTHPVFQSHHTETKMLRYIRKLESRDLSLTTSMIPLGSCTMKLNATTEMYPVTWPEFGAIHPFAPADQTKGYKIIFEQLEKWLCEITGFAGVSLQPNAGSQGEYAGLLAIRRYHESRNESYRNVCLIPISAHGTNPASAAMAGFQVVVVSCDPNGNVDLEDLKAKAEEHKKDLAALMITYPSTHGVFEESVKEICQIVHSCGGQVYMDGANMNAQVGLTSPGEIGADVCHLNLHKTFCIPHGGGGPGVGPIGVAKHLVPFLPGHVLVDNATGNEHGAVSAAPWGSASIVLISWVYIALMGSEGLTNATRNSILNANYIAKRLEKVYPVLYKGKNGFVAHECILDLRPFKKSAGIEVEDVAKRLIDYGFHAPTMSFPVPGTLMIEPTESESLEELDRFCEAMLLIYQEILDVQSGTLDKTDNPLKNSPHTAAMVTSDRWDHLYPRERAAYPASWLKDHKFWPYVGRVDNVYGDRNLVCSCLPIESYQ.

Residues 1–11 (MNSTLQNQTKT) show a composition bias toward polar residues. Residues 1–21 (MNSTLQNQTKTNLEKVGTDPL) form a disordered region. K713 carries the post-translational modification N6-(pyridoxal phosphate)lysine.

It belongs to the GcvP family. In terms of assembly, the glycine cleavage system is composed of four proteins: P, T, L and H. The cofactor is pyridoxal 5'-phosphate.

The catalysed reaction is N(6)-[(R)-lipoyl]-L-lysyl-[glycine-cleavage complex H protein] + glycine + H(+) = N(6)-[(R)-S(8)-aminomethyldihydrolipoyl]-L-lysyl-[glycine-cleavage complex H protein] + CO2. In terms of biological role, the glycine cleavage system catalyzes the degradation of glycine. The P protein binds the alpha-amino group of glycine through its pyridoxal phosphate cofactor; CO(2) is released and the remaining methylamine moiety is then transferred to the lipoamide cofactor of the H protein. This is Glycine dehydrogenase (decarboxylating) from Leptospira interrogans serogroup Icterohaemorrhagiae serovar copenhageni (strain Fiocruz L1-130).